The chain runs to 449 residues: Exodeoxyribonuclease 7 large subunit (449 aa).

This sequence belongs to the XseA family. In terms of assembly, heterooligomer composed of large and small subunits.

The protein localises to the cytoplasm. The enzyme catalyses Exonucleolytic cleavage in either 5'- to 3'- or 3'- to 5'-direction to yield nucleoside 5'-phosphates.. Bidirectionally degrades single-stranded DNA into large acid-insoluble oligonucleotides, which are then degraded further into small acid-soluble oligonucleotides. The polypeptide is Exodeoxyribonuclease 7 large subunit (Salmonella newport (strain SL254)).